The following is a 132-amino-acid chain: MAPSPRTGSRQDATALPSMSSTFWAFMILASLLIAYCSQLAAGTCEIVTLDRDSSQPRRTIARQTARCACRKGQIAGTTRARPACVDARIIKTKQWCDMLPCLEGEGCDLLINRSGWTCTQPGGRIKTTTVS.

Positions 1-43 (MAPSPRTGSRQDATALPSMSSTFWAFMILASLLIAYCSQLAAG) are cleaved as a signal peptide. The N-linked (GlcNAc...) asparagine glycan is linked to N113.

The protein belongs to the TAFA family. As to expression, expressed in the subcutaneous and perirenal adipose tissue (at protein level). Highly expressed in adipose tissue with moderate expression in the brain and ovary. Isoform 2: Brain-specific.

The protein resides in the secreted. Its function is as follows. Acts as a chemokine-like protein by regulating cell proliferation and migration through activation of G protein-coupled receptors (GPCRs), such as S1PR2 and FPR2. Stimulates chemotactic migration of macrophages mediated by the MAPK3/ERK1 and AKT1 pathway. Blocks TNFSF11/RANKL-induced osteoclast formation from macrophages by inhibiting up-regulation of osteoclast fusogenic and differentiation genes. Stimulation of macrophage migration and inhibition of osteoclast formation is mediated via GPCR FPR2. Acts as an adipokine by negatively regulating vascular smooth muscle cell (VSMC) proliferation and migration in response to platelet-derived growth factor stimulation via GPCR S1PR2 and G protein GNA12/GNA13-transmitted RHOA signaling. Inhibits injury-induced cell proliferation and neointima formation in the femoral arteries. This is Chemokine-like protein TAFA-5 from Homo sapiens (Human).